Reading from the N-terminus, the 37-residue chain is Large ribosomal subunit protein bL36A (37 aa).

This sequence belongs to the bacterial ribosomal protein bL36 family.

This is Large ribosomal subunit protein bL36A from Neisseria meningitidis serogroup C (strain 053442).